Reading from the N-terminus, the 2139-residue chain is Voltage-dependent L-type calcium channel subunit alpha-1C (2139 aa).

Residues 1-20 are disordered; the sequence is MVNENTRMYVPEENHQGSNY. Residues 1–124 lie on the Cytoplasmic side of the membrane; it reads MVNENTRMYV…RACISIVEWK (124 aa). The segment at 47-68 is calmodulin-binding; sequence GAALSWQAAIDAARQAKLMGSA. Positions 73–98 are disordered; sequence ISTVSSTQRKRQQYGKPKKQGGTTAT. Residues 80–91 show a composition bias toward basic residues; it reads QRKRQQYGKPKK. The stretch at 111 to 408 is one I repeat; it reads NPIRRACISI…LVLGVLSGEF (298 aa). The helical transmembrane segment at 125-143 threads the bilayer; that stretch reads PFEIIILLTIFANCVALAI. At 144 to 158 the chain is on the extracellular side; it reads YIPFPEDDSNATNSN. N153 carries an N-linked (GlcNAc...) asparagine glycan. Residues 159 to 179 form a helical membrane-spanning segment; the sequence is LERVEYLFLIIFTVEAFLKVI. The Cytoplasmic segment spans residues 180–188; that stretch reads AYGLLFHPN. Residues 189–209 form a helical membrane-spanning segment; that stretch reads AYLRNGWNLLDFIIVVVGLFS. The Extracellular segment spans residues 210–232; sequence AILEQATKADGANALGGKGAGFD. Residues 233-251 traverse the membrane as a helical segment; the sequence is VKALRAFRVLRPLRLVSGV. Over 252 to 268 the chain is Cytoplasmic; that stretch reads PSLQVVLNSIIKAMVPL. Residues 269–290 form a helical membrane-spanning segment; it reads LHIALLVLFVIIIYAIIGLELF. Residues 291–350 are Extracellular-facing; sequence MGKMHKTCYNQEGIIDVPAEEDPSPCALETGHGRQCQNGTVCKPGWDGPKHGITNFDNFA. Cystine bridges form between C298–C326 and C316–C332. An N-linked (GlcNAc...) asparagine glycan is attached at N328. Positions 351-372 form an intramembrane region, pore-forming; it reads FAMLTVFQCITMEGWTDVLYWM. Residues 361 to 364 carry the Selectivity filter of repeat I motif; that stretch reads TMEG. E363 lines the Ca(2+) pocket. The Extracellular portion of the chain corresponds to 373–380; sequence QDAMGYEL. A helical membrane pass occupies residues 381–401; it reads PWVYFVSLVIFGSFFVLNLVL. Residues 402–524 lie on the Cytoplasmic side of the membrane; it reads GVLSGEFSKE…RKCRAAVKSN (123 aa). An AID/alpha-interaction domain; mediates interaction with the beta subunit region spans residues 428-445; the sequence is QQLEEDLKGYLDWITQAE. The segment at 449–481 is disordered; the sequence is PENEDEGMDEDKPRNMSMPTSETESVNTENVAG. Residues 465–478 are compositionally biased toward polar residues; that stretch reads SMPTSETESVNTEN. S469 carries the phosphoserine modification. T476 carries the phosphothreonine modification. The stretch at 510 to 756 is one II repeat; it reads NRFCRRKCRA…VFLAIAVDNL (247 aa). A helical membrane pass occupies residues 525 to 543; it reads VFYWLVIFLVFLNTLTIAS. The Extracellular portion of the chain corresponds to 544 to 554; it reads EHYNQPHWLTE. The chain crosses the membrane as a helical span at residues 555–575; it reads VQDTANKALLALFTAEMLLKM. Over 576–586 the chain is Cytoplasmic; that stretch reads YSLGLQAYFVS. The helical transmembrane segment at 587 to 606 threads the bilayer; that stretch reads LFNRFDCFIVCGGILETILV. Residues 607 to 615 are Extracellular-facing; it reads ETKIMSPLG. The chain crosses the membrane as a helical span at residues 616-634; sequence ISVLRCVRLLRIFKITRYW. Over 635–653 the chain is Cytoplasmic; it reads NSLSNLVASLLNSVRSIAS. A helical transmembrane segment spans residues 654–673; the sequence is LLLLLFLFIIIFSLLGMQLF. Over 674-693 the chain is Extracellular; sequence GGKFNFDEMQTRRSTFDNFP. The pore-forming intramembrane region spans 694-715; sequence QSLLTVFQILTGEDWNSVMYDG. The Selectivity filter of repeat II motif lies at 704-707; it reads TGED. E706 serves as a coordination point for Ca(2+). The Extracellular portion of the chain corresponds to 716-725; the sequence is IMAYGGPSFP. A helical membrane pass occupies residues 726 to 745; the sequence is GMLVCIYFIILFICGNYILL. At 746–900 the chain is on the cytoplasmic side; sequence NVFLAIAVDN…LQCHRIVNDT (155 aa). Residues 764-861 are disordered; the sequence is SAQKEEEEEK…EMPVGPRPRP (98 aa). The span at 783–806 shows a compositional bias: basic and acidic residues; the sequence is SPEKKQEVMEKPAVEESKEEKIEL. A phosphoserine mark is found at S808 and S815. The interaction with STAC2 stretch occupies residues 829–876; that stretch reads SENEDKSPHSNPDTAGEEDEEEPEMPVGPRPRPLSELHLKEKAVPMPE. Over residues 843–852 the composition is skewed to acidic residues; it reads AGEEDEEEPE. The III repeat unit spans residues 887-1169; that stretch reads NRFRLQCHRI…IFVGFVIVTF (283 aa). A helical membrane pass occupies residues 901 to 919; it reads IFTNLILFFILLSSISLAA. Residues 920-931 lie on the Extracellular side of the membrane; that stretch reads EDPVQHTSFRNH. A helical membrane pass occupies residues 932-951; that stretch reads ILGNADYVFTSIFTLEIILK. Residues 952-967 lie on the Cytoplasmic side of the membrane; it reads MTAYGAFLHKGSFCRN. The helical transmembrane segment at 968-986 threads the bilayer; the sequence is YFNILDLLVVSVSLISFGI. At 987–993 the chain is on the extracellular side; that stretch reads QSSAINV. The chain crosses the membrane as a helical span at residues 994-1012; the sequence is VKILRVLRVLRPLRAINRA. Residues 1013-1031 lie on the Cytoplasmic side of the membrane; that stretch reads KGLKHVVQCVFVAIRTIGN. A helical transmembrane segment spans residues 1032–1051; it reads IVIVTTLLQFMFACIGVQLF. The Extracellular portion of the chain corresponds to 1052–1101; that stretch reads KGKLYTCSDSSKQTEAECKGNYITYKDGEVDHPIIQPRSWENSKFDFDNV. C1058 and C1069 are joined by a disulfide. Residues 1089-1178 form a dihydropyridine binding region; sequence RSWENSKFDF…FQEQGEQEYK (90 aa). The segment at residues 1102–1122 is an intramembrane region (pore-forming); the sequence is LAAMMALFTVSTFEGWPELLY. A Selectivity filter of repeat III motif is present at residues 1113–1116; sequence TFEG. E1115 provides a ligand contact to Ca(2+). Over 1123–1139 the chain is Extracellular; it reads RSIDSHTEDKGPIYNYR. A helical membrane pass occupies residues 1140–1161; sequence VEISIFFIIYIIIIAFFMMNIF. Over 1162 to 1219 the chain is Cytoplasmic; it reads VGFVIVTFQEQGEQEYKNCELDKNQRQCVEYALKARPLRRYIPKNQHQYKVWYVVNST. The stretch at 1206–1479 is one IV repeat; the sequence is NQHQYKVWYV…LFVAVIMDNF (274 aa). Residues 1220 to 1241 traverse the membrane as a helical segment; that stretch reads YFEYLMFVLILLNTICLAMQHY. Residues 1242–1249 lie on the Extracellular side of the membrane; it reads GQSCLFKI. Residues 1250-1271 traverse the membrane as a helical segment; it reads AMNILNMLFTGLFTVEMILKLI. At 1272-1281 the chain is on the cytoplasmic side; that stretch reads AFKPKGYFSD. The chain crosses the membrane as a helical span at residues 1282-1301; that stretch reads PWNVFDFLIVIGSIIDVILS. Residues 1302–1324 are Extracellular-facing; that stretch reads ETNPAEHTQCSPSMSAEENSRIS. Residues 1325–1343 form a helical membrane-spanning segment; the sequence is ITFFRLFRVMRLVKLLSRG. The Cytoplasmic portion of the chain corresponds to 1344 to 1361; it reads EGIRTLLWTFIKSFQALP. The helical transmembrane segment at 1362-1382 threads the bilayer; that stretch reads YVALLIVMLFFIYAVIGMQVF. Over 1383-1404 the chain is Extracellular; the sequence is GKIALNDTTEINRNNNFQTFPQ. N1388 carries N-linked (GlcNAc...) asparagine glycosylation. Residues 1405 to 1423 constitute an intramembrane region (pore-forming); it reads AVLLLFRCATGEAWQDIML. A Selectivity filter of repeat IV motif is present at residues 1414–1417; that stretch reads TGEA. Residues 1424 to 1451 lie on the Extracellular side of the membrane; that stretch reads ACMPGKKCAPESEPSNSTEGETPCGSSF. A dihydropyridine binding region spans residues 1430–1498; it reads KCAPESEPSN…LGPHHLDEFK (69 aa). C1431 and C1447 form a disulfide bridge. N1439 carries an N-linked (GlcNAc...) asparagine glycan. The interval 1444–1486 is phenylalkylamine binding; that stretch reads ETPCGSSFAVFYFISFYMLCAFLIINLFVAVIMDNFDYLTRDW. The helical transmembrane segment at 1452–1476 threads the bilayer; that stretch reads AVFYFISFYMLCAFLIINLFVAVIM. The Cytoplasmic portion of the chain corresponds to 1477–2139; sequence DNFDYLTRDW…ADSRSYVSNL (663 aa). The interval 1611–1638 is important for interaction with STAC1, STAC2 and STAC3; that stretch reads DEVTVGKFYATFLIQEYFRKFKKRKEQG. Positions 1611–1644 are calmodulin-binding; it reads DEVTVGKFYATFLIQEYFRKFKKRKEQGLVGKPS. Residues 1617–1637 form a calmodulin-binding IQ region region; sequence KFYATFLIQEYFRKFKKRKEQ. Positions 1651 to 1670 are important for localization in at the junctional membrane; that stretch reads LQAGLRTLHDIGPEIRRAIS. A phosphoserine mark is found at S1670 and S1691. Polar residues-rich tracts occupy residues 1732–1741 and 1751–1763; these read KTGNNQADTE and STFT…STGS. The disordered stretch occupies residues 1732-1773; that stretch reads KTGNNQADTESPSHEKLVDSTFTPSSYSSTGSNANINNANNT. Over residues 1764–1773 the composition is skewed to low complexity; that stretch reads NANINNANNT. S1897 is modified (phosphoserine; by PKA). A disordered region spans residues 1940–1966; sequence RSHSPTTFPRPCPTPPVTPGSRGRPLR. The span at 1947–1957 shows a compositional bias: pro residues; sequence FPRPCPTPPVT.

It belongs to the calcium channel alpha-1 subunit (TC 1.A.1.11) family. CACNA1C subfamily. In terms of assembly, component of a calcium channel complex consisting of a pore-forming alpha subunit (CACNA1C) and ancillary beta, gamma and delta subunits. The channel complex contains alpha, beta, gamma and delta subunits in a 1:1:1:1 ratio, i.e. it contains only one of each type of subunit. CACNA1C channel activity is modulated by ancillary subunits, such as CACNB1, CACNB2, CACNB3, CACNA2D1 and CACNA2D4. Interacts with the gamma subunits CACNG4, CACNG6, CACNG7 and CACNG8. Interacts with CACNB1. Interacts with CACNB2. Identified in a complex with CACNA2D4 and CACNB3. Interacts with CACNB3. Interacts with CACNA2D1. Interacts with CACNA2D4. Interacts with CALM1. Interacts (via the N-terminus and the C-terminal C and IQ motifs) with CABP1; this inhibits Ca(2+)-dependent channel inactivation. The binding via the C motif is calcium independent whereas the binding via IQ requires the presence of calcium and is mutually exclusive with calmodulin binding. The binding to the cytoplasmic N-terminal domain is calcium independent but is essential for the channel modulation. Interacts (via C-terminal CDB motif) with CABP5; in a calcium-dependent manner. Interacts with CIB1; the interaction increases upon cardiomyocytes hypertrophy. Interacts with STAC2 and STAC3; this inhibits channel inactivation. Phosphorylation by PKA at Ser-1897 activates the channel. Elevated levels of blood glucose lead to increased phosphorylation by PKA. As to expression, detected in embryonic heart. Detected in retina in rod bipolar cells. Detected in tibialis artery (at protein level). Detected in smooth muscle cells from tibialis artery and in mesenteric artery. High expression in heart, followed by brain and spinal cord.

It localises to the cell membrane. It is found in the sarcolemma. Its subcellular location is the perikaryon. The protein localises to the postsynaptic density membrane. The protein resides in the cell projection. It localises to the dendrite. It is found in the T-tubule. It carries out the reaction Ca(2+)(in) = Ca(2+)(out). With respect to regulation, inhibited by dihydropyridines (DHP), such as isradipine. Inhibited by nifedipine. Channel activity is regulated by Ca(2+) and calmodulin. Binding of STAC1, STAC2 or STAC3 to a region that overlaps with the calmodulin binding site inhibits channel inactivation by Ca(2+) and calmodulin. Binding of calmodulin or CABP1 at the same regulatory sites results in opposite effects on the channel function. Shear stress and pressure increases calcium channel activity. In terms of biological role, pore-forming, alpha-1C subunit of the voltage-gated calcium channel that gives rise to L-type calcium currents. Mediates influx of calcium ions into the cytoplasm, and thereby triggers calcium release from the sarcoplasm. Plays an important role in excitation-contraction coupling in the heart. Required for normal heart development and normal regulation of heart rhythm. Required for normal contraction of smooth muscle cells in blood vessels and in the intestine. Essential for normal blood pressure regulation via its role in the contraction of arterial smooth muscle cells. Long-lasting (L-type) calcium channels belong to the 'high-voltage activated' (HVA) group. This chain is Voltage-dependent L-type calcium channel subunit alpha-1C (Cacna1c), found in Mus musculus (Mouse).